Reading from the N-terminus, the 881-residue chain is MSNTEKNLPTKYDHMSVEEGLYQWWLEGKYFEATGDEKKQPYTIVIPPPNVTGKLHLGHAWDTTLQDILTRTKRMQGYDVLWLPGMDHAGIATQAKVEGKLREEGISRYDLGREKFLEKAWEWKEEYASHIRQQWGKVGLGLDYSRERFTLDEGLSDAVNKVFVQLYEKGLIYRGEYIINWDPATRTALSDIEVIHKEVQGAFYHMNYPLTDGSGHIRLATTRPETMLGDTAVAVHPEDDRYKHLIGKTVTLPIVGREIPIIADEYVEKDFGTGVVKITPAHDPNDFEVGNRHDLPRILVMNEDGTMNEKAGKYNGMDRFECRKALVKDLQEAGVLVEIEPHMHSVGHSERSGAVVEPYLSTQWFVKMAPLAEKAVALQQKEEEKVTFVPERFENTYLRWMENIHDWCISRQLWWGHRIPAWYHKETGEVYVGTEAPADIENWNQDNDVLDTWFSSALWPFSTLGWPNEDAADFKRYYSTDALVTGYDIIFFWVSRMIFQGLEFTGERPFKDVLIHGLVRDEQGRKMSKSLGNGIDPMEVIEKYGADAMRFFLSTGSAPGQDLRFSMEKVESTWNFINKIWNASRFVLMNMDDMKYEEIDLTGEKSVADKWILTRLNETIESVTRNMDKYEFGEAGRSLYNFIWDDFCDWYIEMAKLPLYGEDEAAKKTTRSILAYVLDQTMRLLHPFMPFVTEKIWQHLPHEGESITVAAWPTVREDLQDAEAAAEMHLLVDIIRSVRNIRAEVNTPMSKKVQMQIKAKDEAVLAQLTKNSSYIERFCNPSELTIQTDLQAPEKAMTAIVTGAELFLPLADLINLDEERARLEKELEKFDKEVERVQKKLSNQGFVAKAPAAVIEGERAKEQDYLEKREAVRQRLADLEK.

The 'HIGH' region motif lies at Pro49–His59. A 'KMSKS' region motif is present at residues Lys526–Ser530. Lys529 lines the ATP pocket. The stretch at Leu810–Lys881 forms a coiled coil.

This sequence belongs to the class-I aminoacyl-tRNA synthetase family. ValS type 1 subfamily. In terms of assembly, monomer.

Its subcellular location is the cytoplasm. The enzyme catalyses tRNA(Val) + L-valine + ATP = L-valyl-tRNA(Val) + AMP + diphosphate. Catalyzes the attachment of valine to tRNA(Val). As ValRS can inadvertently accommodate and process structurally similar amino acids such as threonine, to avoid such errors, it has a 'posttransfer' editing activity that hydrolyzes mischarged Thr-tRNA(Val) in a tRNA-dependent manner. The chain is Valine--tRNA ligase from Bacillus cereus (strain ATCC 10987 / NRS 248).